A 310-amino-acid polypeptide reads, in one-letter code: Olfactory receptor 5AR1 (310 aa).

Over 1 to 28 (MDKENSSMVTEFIFMGITQDPQMEIIFF) the chain is Extracellular. The N-linked (GlcNAc...) asparagine glycan is linked to Asn5. Residues 29-49 (VVFLIVYLVNVVGNIGMIILI) traverse the membrane as a helical segment. Residues 50 to 58 (TTDTQLHTP) are Cytoplasmic-facing. Residues 59–79 (MYFFLCNLSFVDLGYSSAIAP) form a helical membrane-spanning segment. At 80–100 (RMLADFLTNHKVISFSSCATQ) the chain is on the extracellular side. A disulfide bond links Cys97 and Cys189. Residues 101 to 120 (FAFFVGFVDAECYVLAAMAY) traverse the membrane as a helical segment. The Cytoplasmic segment spans residues 121 to 139 (GRFVAICRPLHYSTFMSKQ). Residues 140–160 (VCLALMLGSYLAGLVSLVAHT) form a helical membrane-spanning segment. At 161-205 (TLTFSLSYCGSNIINHFFCEIPPLLALSCSDTYISEILLFSLCGF) the chain is on the extracellular side. The helical transmembrane segment at 206–226 (IEFSTILIIFISYTFILVAII) threads the bilayer. The Cytoplasmic portion of the chain corresponds to 227–239 (RMRSAEGRLKAFS). A helical membrane pass occupies residues 240–260 (TCGSHLTGITLFYGTVMFMYL). The Extracellular portion of the chain corresponds to 261–271 (RPTSSYSLDQD). A helical transmembrane segment spans residues 272–292 (KWASVFYTVIIPMLNPLIYSL). Over 293–310 (RNKDVKAAFKKLIGKKSQ) the chain is Cytoplasmic.

The protein belongs to the G-protein coupled receptor 1 family.

Its subcellular location is the cell membrane. Odorant receptor. In Homo sapiens (Human), this protein is Olfactory receptor 5AR1.